The sequence spans 223 residues: Putative protein phosphatase 2C 63 (223 aa).

Positions 1–22 are disordered; that stretch reads MASSQQAVRETGRGRASSSSAG. In terms of domain architecture, PPM-type phosphatase spans 1-212; it reads MASSQQAVRE…RNFHVHSSHV (212 aa).

Belongs to the PP2C family.

The catalysed reaction is O-phospho-L-seryl-[protein] + H2O = L-seryl-[protein] + phosphate. It catalyses the reaction O-phospho-L-threonyl-[protein] + H2O = L-threonyl-[protein] + phosphate. This is Putative protein phosphatase 2C 63 from Oryza sativa subsp. japonica (Rice).